The sequence spans 228 residues: Phosphoglycolate phosphatase (228 aa).

The active-site Nucleophile is the D12. Residues D12, D14, and D177 each coordinate Mg(2+).

Belongs to the HAD-like hydrolase superfamily. CbbY/CbbZ/Gph/YieH family. Mg(2+) serves as cofactor.

It catalyses the reaction 2-phosphoglycolate + H2O = glycolate + phosphate. Its pathway is organic acid metabolism; glycolate biosynthesis; glycolate from 2-phosphoglycolate: step 1/1. Its function is as follows. Specifically catalyzes the dephosphorylation of 2-phosphoglycolate. Is involved in the dissimilation of the intracellular 2-phosphoglycolate formed during the DNA repair of 3'-phosphoglycolate ends, a major class of DNA lesions induced by oxidative stress. The chain is Phosphoglycolate phosphatase from Vibrio vulnificus (strain YJ016).